We begin with the raw amino-acid sequence, 304 residues long: UDP-3-O-acyl-N-acetylglucosamine deacetylase (304 aa).

Positions 78, 237, and 241 each coordinate Zn(2+). The active-site Proton donor is histidine 264.

The protein belongs to the LpxC family. The cofactor is Zn(2+).

It catalyses the reaction a UDP-3-O-[(3R)-3-hydroxyacyl]-N-acetyl-alpha-D-glucosamine + H2O = a UDP-3-O-[(3R)-3-hydroxyacyl]-alpha-D-glucosamine + acetate. It participates in glycolipid biosynthesis; lipid IV(A) biosynthesis; lipid IV(A) from (3R)-3-hydroxytetradecanoyl-[acyl-carrier-protein] and UDP-N-acetyl-alpha-D-glucosamine: step 2/6. In terms of biological role, catalyzes the hydrolysis of UDP-3-O-myristoyl-N-acetylglucosamine to form UDP-3-O-myristoylglucosamine and acetate, the committed step in lipid A biosynthesis. The sequence is that of UDP-3-O-acyl-N-acetylglucosamine deacetylase from Thioalkalivibrio sulfidiphilus (strain HL-EbGR7).